The chain runs to 939 residues: UvrABC system protein A (939 aa).

32–39 contributes to the ATP binding site; it reads GLSGSGKS. The C4-type zinc-finger motif lies at 252–279; that stretch reads CADCGISIDELAPRMFSFNSPFGKCERC. ABC transporter domains are found at residues 309-588 and 608-936; these read WGDS…ENSL and GNGN…KYLK. 640 to 647 is a binding site for ATP; it reads GVSGSGKS. The C4-type zinc-finger motif lies at 739–765; it reads CEACSGDGIIKIEMQFLSDVYVPCEVC.

The protein belongs to the ABC transporter superfamily. UvrA family. Forms a heterotetramer with UvrB during the search for lesions.

The protein localises to the cytoplasm. The UvrABC repair system catalyzes the recognition and processing of DNA lesions. UvrA is an ATPase and a DNA-binding protein. A damage recognition complex composed of 2 UvrA and 2 UvrB subunits scans DNA for abnormalities. When the presence of a lesion has been verified by UvrB, the UvrA molecules dissociate. This is UvrABC system protein A from Clostridium perfringens (strain 13 / Type A).